Consider the following 397-residue polypeptide: Subtilisin-like protease 3 (397 aa).

Positions 1–19 are cleaved as a signal peptide; sequence MGCIKVISVFLAAIAAVDA. The propeptide occupies 20–116; that stretch reads RAFFHNRGGS…VEHDRVVKLA (97 aa). The Inhibitor I9 domain occupies 35 to 116; the sequence is SYIVVMKDGV…VEHDRVVKLA (82 aa). A Peptidase S8 domain is found at 126–397; that stretch reads TWGLGRVSHR…NRLLYNGSGQ (272 aa). Residues aspartate 158 and histidine 189 each act as charge relay system in the active site. Residue asparagine 250 is glycosylated (N-linked (GlcNAc...) asparagine). The active-site Charge relay system is the serine 344. N-linked (GlcNAc...) asparagine glycosylation is present at asparagine 393.

This sequence belongs to the peptidase S8 family.

It localises to the secreted. Functionally, secreted subtilisin-like serine protease with keratinolytic activity that contributes to pathogenicity. The sequence is that of Subtilisin-like protease 3 (SUB3) from Trichophyton equinum (Horse ringworm fungus).